The chain runs to 673 residues: B3 domain-containing protein Os01g0905400 (673 aa).

Residues 1–34 (MVELIKVPKIEQEEGNADSHGKEKADVVHEEKTE) show a composition bias toward basic and acidic residues. A disordered region spans residues 1 to 44 (MVELIKVPKIEQEEGNADSHGKEKADVVHEEKTEKVKRRRKRVS). Positions 79 to 172 (LPSFFKIMVG…VFTVQIFAIS (94 aa)) form a DNA-binding region, TF-B3 1. Residues 315–337 (PSFSYPESSNVMTADKESERSHQ) are disordered. Residues 328–337 (ADKESERSHQ) are compositionally biased toward basic and acidic residues. The TF-B3 2 DNA-binding region spans 576–671 (SKKFCITIPP…ELSFQVLVPN (96 aa)).

It is found in the nucleus. The protein is B3 domain-containing protein Os01g0905400 of Oryza sativa subsp. japonica (Rice).